The chain runs to 361 residues: UPF0283 membrane protein Smed_1530 (361 aa).

Residues 1 to 40 (MNDDSNGRRRRPAAFPVGTEDATSRELEQTPRRAPGSFSD) are disordered. The segment covering 22-31 (ATSRELEQTP) has biased composition (basic and acidic residues). 2 consecutive transmembrane segments (helical) span residues 76–96 (FGKI…GLWV) and 109–129 (WLGY…LIVV).

This sequence belongs to the UPF0283 family.

The protein localises to the cell inner membrane. The protein is UPF0283 membrane protein Smed_1530 of Sinorhizobium medicae (strain WSM419) (Ensifer medicae).